A 350-amino-acid chain; its full sequence is Ketol-acid reductoisomerase (NADP(+)) (350 aa).

The KARI N-terminal Rossmann domain occupies 4 to 187 (VSITTDYSRM…GGARANIIKT (184 aa)). Residues 30–33 (YGSQ), arginine 53, threonine 58, and 88–91 (DMVQ) contribute to the NADP(+) site. Histidine 113 is an active-site residue. NADP(+) is bound at residue glycine 139. One can recognise a KARI C-terminal knotted domain in the interval 188–333 (TFKEETETDL…KQLRAKMVWL (146 aa)). Residues aspartate 196, glutamate 200, glutamate 232, and glutamate 236 each contribute to the Mg(2+) site. Serine 257 serves as a coordination point for substrate.

This sequence belongs to the ketol-acid reductoisomerase family. It depends on Mg(2+) as a cofactor.

The catalysed reaction is (2R)-2,3-dihydroxy-3-methylbutanoate + NADP(+) = (2S)-2-acetolactate + NADPH + H(+). It catalyses the reaction (2R,3R)-2,3-dihydroxy-3-methylpentanoate + NADP(+) = (S)-2-ethyl-2-hydroxy-3-oxobutanoate + NADPH + H(+). Its pathway is amino-acid biosynthesis; L-isoleucine biosynthesis; L-isoleucine from 2-oxobutanoate: step 2/4. The protein operates within amino-acid biosynthesis; L-valine biosynthesis; L-valine from pyruvate: step 2/4. Involved in the biosynthesis of branched-chain amino acids (BCAA). Catalyzes an alkyl-migration followed by a ketol-acid reduction of (S)-2-acetolactate (S2AL) to yield (R)-2,3-dihydroxy-isovalerate. In the isomerase reaction, S2AL is rearranged via a Mg-dependent methyl migration to produce 3-hydroxy-3-methyl-2-ketobutyrate (HMKB). In the reductase reaction, this 2-ketoacid undergoes a metal-dependent reduction by NADPH to yield (R)-2,3-dihydroxy-isovalerate. In Xylella fastidiosa (strain 9a5c), this protein is Ketol-acid reductoisomerase (NADP(+)).